Consider the following 845-residue polypeptide: Translation initiation factor IF-2 (845 aa).

Basic and acidic residues-rich tracts occupy residues 139 to 198 (EAKR…EKPA) and 206 to 228 (FRSEDRESEQKQRGTKFGRKELH). Residues 139–253 (EAKRQAAEEE…PQKAAPAAKH (115 aa)) are disordered. Positions 345 to 512 (SRAAVVTIMG…AILLQAEVME (168 aa)) constitute a tr-type G domain. Residues 354–361 (GHVDHGKT) are G1. 354-361 (GHVDHGKT) serves as a coordination point for GTP. The tract at residues 379–383 (GITQH) is G2. A G3 region spans residues 400–403 (DTPG). Residues 400–404 (DTPGH) and 454–457 (NKID) each bind GTP. The segment at 454-457 (NKID) is G4. The interval 490–492 (SAK) is G5.

It belongs to the TRAFAC class translation factor GTPase superfamily. Classic translation factor GTPase family. IF-2 subfamily.

The protein localises to the cytoplasm. In terms of biological role, one of the essential components for the initiation of protein synthesis. Protects formylmethionyl-tRNA from spontaneous hydrolysis and promotes its binding to the 30S ribosomal subunits. Also involved in the hydrolysis of GTP during the formation of the 70S ribosomal complex. This is Translation initiation factor IF-2 from Nitrosococcus oceani (strain ATCC 19707 / BCRC 17464 / JCM 30415 / NCIMB 11848 / C-107).